Here is a 380-residue protein sequence, read N- to C-terminus: Chaperone protein DnaJ (380 aa).

Positions 5-72 (DFYEVLGVAK…NKRAAYDQYG (68 aa)) constitute a J domain. Residues 140–218 (GKDAQIRIPS…CGGQGKVKRQ (79 aa)) form a CR-type zinc finger. Cys-153, Cys-156, Cys-170, Cys-173, Cys-192, Cys-195, Cys-206, and Cys-209 together coordinate Zn(2+). 4 CXXCXGXG motif repeats span residues 153 to 160 (CDTCHGSG), 170 to 177 (CTTCNGMG), 192 to 199 (CPHCRGTG), and 206 to 213 (CTSCGGQG). The disordered stretch occupies residues 359-380 (KGGAKHSPSGESWTDRLKSFFS). Over residues 371 to 380 (WTDRLKSFFS) the composition is skewed to basic and acidic residues.

Belongs to the DnaJ family. In terms of assembly, homodimer. It depends on Zn(2+) as a cofactor.

It is found in the cytoplasm. Its function is as follows. Participates actively in the response to hyperosmotic and heat shock by preventing the aggregation of stress-denatured proteins and by disaggregating proteins, also in an autonomous, DnaK-independent fashion. Unfolded proteins bind initially to DnaJ; upon interaction with the DnaJ-bound protein, DnaK hydrolyzes its bound ATP, resulting in the formation of a stable complex. GrpE releases ADP from DnaK; ATP binding to DnaK triggers the release of the substrate protein, thus completing the reaction cycle. Several rounds of ATP-dependent interactions between DnaJ, DnaK and GrpE are required for fully efficient folding. Also involved, together with DnaK and GrpE, in the DNA replication of plasmids through activation of initiation proteins. This Delftia acidovorans (strain DSM 14801 / SPH-1) protein is Chaperone protein DnaJ.